The primary structure comprises 260 residues: Ribosome maturation factor RimP (260 aa).

2 stretches are compositionally biased toward basic and acidic residues: residues 189 to 199 (RRGRDAEREQL) and 215 to 227 (AREMRDKAGPRKE). A disordered region spans residues 189-260 (RRGRDAEREQ…QTTSDPHQGE (72 aa)). Residues 228 to 242 (KTAKKPLPKNTKAHR) are compositionally biased toward basic residues.

The protein belongs to the RimP family.

It localises to the cytoplasm. Functionally, required for maturation of 30S ribosomal subunits. In Afipia carboxidovorans (strain ATCC 49405 / DSM 1227 / KCTC 32145 / OM5) (Oligotropha carboxidovorans), this protein is Ribosome maturation factor RimP.